We begin with the raw amino-acid sequence, 280 residues long: Vacuolar protein sorting-associated protein 71 (280 aa).

Over residues 64–73 (RSEGDGNSIS) the composition is skewed to polar residues. The segment at 64–92 (RSEGDGNSISRQDDRNSKNSHSFEERYTQ) is disordered. Residues 74 to 92 (RQDDRNSKNSHSFEERYTQ) are compositionally biased toward basic and acidic residues. Zn(2+) contacts are provided by Cys244, Cys247, Cys256, Cys259, Cys264, Cys268, His272, and Cys277. The HIT-type zinc finger occupies 244-277 (CSICGGYDSISSCVNCGNKICSVSCFKLHNETRC).

In terms of assembly, belongs to the SWR1 complex at least composed of ACT1, ARP4, RVB1, RVB2, ARP6, YAF9, VPS71, VPS72, SWC3, SWC4, SWC5, SWR1 and HTZ1.

Its subcellular location is the nucleus. In terms of biological role, participates in the catalytic exchange of histone H2A for the H2A variant HZT1, an euchromatin-specific factor, leading to chromatin remodeling and changes in transcription of targeted genes. Indirectly involved in vacuolar protein sorting. This Saccharomyces cerevisiae (strain ATCC 204508 / S288c) (Baker's yeast) protein is Vacuolar protein sorting-associated protein 71 (VPS71).